The following is a 104-amino-acid chain: Photosystem II reaction center Psb28 protein (104 aa).

Belongs to the Psb28 family. Part of the photosystem II complex.

It is found in the cellular thylakoid membrane. The sequence is that of Photosystem II reaction center Psb28 protein from Synechococcus sp. (strain JA-2-3B'a(2-13)) (Cyanobacteria bacterium Yellowstone B-Prime).